Reading from the N-terminus, the 125-residue chain is Apolipoprotein C-IV (125 aa).

Positions M1–C27 are cleaved as a signal peptide.

The protein belongs to the apolipoprotein C4 family.

The protein localises to the secreted. Functionally, may participate in lipoprotein metabolism. The polypeptide is Apolipoprotein C-IV (APOC4) (Plecturocebus moloch (Dusky titi monkey)).